We begin with the raw amino-acid sequence, 283 residues long: Thymidylate synthase (283 aa).

Position 22 (arginine 22) interacts with dUMP. Residue cysteine 160 is the Nucleophile of the active site. DUMP contacts are provided by residues 180–183 (RSCD), asparagine 191, and 221–223 (HIY). Aspartate 183 contributes to the (6R)-5,10-methylene-5,6,7,8-tetrahydrofolate binding site. Residue serine 282 participates in (6R)-5,10-methylene-5,6,7,8-tetrahydrofolate binding.

Belongs to the thymidylate synthase family. Bacterial-type ThyA subfamily. Homodimer.

The protein resides in the cytoplasm. The enzyme catalyses dUMP + (6R)-5,10-methylene-5,6,7,8-tetrahydrofolate = 7,8-dihydrofolate + dTMP. The protein operates within pyrimidine metabolism; dTTP biosynthesis. Functionally, catalyzes the reductive methylation of 2'-deoxyuridine-5'-monophosphate (dUMP) to 2'-deoxythymidine-5'-monophosphate (dTMP) while utilizing 5,10-methylenetetrahydrofolate (mTHF) as the methyl donor and reductant in the reaction, yielding dihydrofolate (DHF) as a by-product. This enzymatic reaction provides an intracellular de novo source of dTMP, an essential precursor for DNA biosynthesis. This is Thymidylate synthase from Shewanella pealeana (strain ATCC 700345 / ANG-SQ1).